Reading from the N-terminus, the 201-residue chain is Large ribosomal subunit protein bL25 (201 aa).

This sequence belongs to the bacterial ribosomal protein bL25 family. CTC subfamily. As to quaternary structure, part of the 50S ribosomal subunit; part of the 5S rRNA/L5/L18/L25 subcomplex. Contacts the 5S rRNA. Binds to the 5S rRNA independently of L5 and L18.

In terms of biological role, this is one of the proteins that binds to the 5S RNA in the ribosome where it forms part of the central protuberance. This is Large ribosomal subunit protein bL25 from Akkermansia muciniphila (strain ATCC BAA-835 / DSM 22959 / JCM 33894 / BCRC 81048 / CCUG 64013 / CIP 107961 / Muc).